The following is a 351-amino-acid chain: N-acetyl-gamma-glutamyl-phosphate reductase (351 aa).

C154 is an active-site residue.

It belongs to the NAGSA dehydrogenase family. Type 1 subfamily.

Its subcellular location is the cytoplasm. It catalyses the reaction N-acetyl-L-glutamate 5-semialdehyde + phosphate + NADP(+) = N-acetyl-L-glutamyl 5-phosphate + NADPH + H(+). The protein operates within amino-acid biosynthesis; L-arginine biosynthesis; N(2)-acetyl-L-ornithine from L-glutamate: step 3/4. Its function is as follows. Catalyzes the NADPH-dependent reduction of N-acetyl-5-glutamyl phosphate to yield N-acetyl-L-glutamate 5-semialdehyde. The chain is N-acetyl-gamma-glutamyl-phosphate reductase from Prochlorococcus marinus (strain MIT 9215).